The sequence spans 272 residues: Ribosomal RNA small subunit methyltransferase A (272 aa).

6 residues coordinate S-adenosyl-L-methionine: N20, L22, G47, E68, D93, and N114.

Belongs to the class I-like SAM-binding methyltransferase superfamily. rRNA adenine N(6)-methyltransferase family. RsmA subfamily.

The protein localises to the cytoplasm. It catalyses the reaction adenosine(1518)/adenosine(1519) in 16S rRNA + 4 S-adenosyl-L-methionine = N(6)-dimethyladenosine(1518)/N(6)-dimethyladenosine(1519) in 16S rRNA + 4 S-adenosyl-L-homocysteine + 4 H(+). Functionally, specifically dimethylates two adjacent adenosines (A1518 and A1519) in the loop of a conserved hairpin near the 3'-end of 16S rRNA in the 30S particle. May play a critical role in biogenesis of 30S subunits. The polypeptide is Ribosomal RNA small subunit methyltransferase A (Aliivibrio fischeri (strain ATCC 700601 / ES114) (Vibrio fischeri)).